The sequence spans 350 residues: Quinolinate phosphoribosyltransferase [decarboxylating] 1b (350 aa).

Substrate-binding positions include Arg141, 172–174 (TRK), Arg196, Lys206, Glu239, Asp266, 298–300 (SGN), and 319–321 (SGA).

The protein belongs to the NadC/ModD family.

The catalysed reaction is nicotinate beta-D-ribonucleotide + CO2 + diphosphate = quinolinate + 5-phospho-alpha-D-ribose 1-diphosphate + 2 H(+). The protein operates within alkaloid biosynthesis; nicotine biosynthesis. It functions in the pathway cofactor biosynthesis; NAD(+) biosynthesis; nicotinate D-ribonucleotide from quinolinate: step 1/1. In terms of biological role, involved in the biosynthesis of pyridine alkaloid natural products, leading mainly to the production of anabasine, anatabine, nicotine and nornicotine, effective deterrents against herbivores with antiparasitic and pesticide properties (neurotoxins); nornicotine serves as the precursor in the synthesis of the carcinogen compound N'-nitrosonornicotine (NNN). Involved in the catabolism of quinolinic acid (QA). The chain is Quinolinate phosphoribosyltransferase [decarboxylating] 1b from Nicotiana tabacum (Common tobacco).